A 211-amino-acid chain; its full sequence is Outer surface protein C (211 aa).

The N-terminal stretch at 1–18 is a signal peptide; that stretch reads MKKNTLSAILMTLFLFIS. The N-palmitoyl cysteine moiety is linked to residue Cys19. Cys19 is lipidated: S-diacylglycerol cysteine.

It belongs to the OspC lipoprotein family. In terms of assembly, homodimer. Interacts with tick I.ricinus salivary protein Iric-1, Iric-2 and Iric-3. Binds human (host) plasminogen.

It localises to the cell outer membrane. Its subcellular location is the cell surface. Its function is as follows. Major immunodominant protein in mammalian hosts. Required for initial stages of mammalian infection. Inhibits macrophage-mediated phagocytosis of the bacteria. Binds human plasminogen; this probably confers an extracellular protease activity on the bacteria that allows it to traverse tissue. Interaction with tick I.ricinus salivary protein Salp15 protects the bacteria from antibody-mediated killing in vitro and in vivo. The sequence is that of Outer surface protein C from Borreliella burgdorferi (Lyme disease spirochete).